Here is a 22-residue protein sequence, read N- to C-terminus: NDMA-dependent alcohol dehydrogenase (22 aa).

This sequence belongs to the zinc-containing alcohol dehydrogenase family. As to quaternary structure, homotetramer. NADH is required as a cofactor.

It is found in the cytoplasm. It carries out the reaction N,N-dimethyl-4-nitrosoaniline + a primary alcohol = 4-(hydroxylamino)-N,N-dimethylaniline + an aldehyde. It catalyses the reaction ethanol + A = acetaldehyde + AH2. This is a novel enzyme, catalytically different from common alcohol dehydrogenases. It is effective in oxidizing ethanol, other primary alcohols and benzylalcohol only in the presence of p-nitroso-N,N-dimethylaniline (NDMA) as an electron acceptor. NADH acts as a cofactor here instead of as a coenzyme. The sequence is that of NDMA-dependent alcohol dehydrogenase from Rhodococcus erythropolis (Arthrobacter picolinophilus).